Reading from the N-terminus, the 85-residue chain is MSATIPARDLRNHTAEVLRRVAAGEEIEVLKDNRPVARIVPLKRRRQWLPAAEVIGELVRLGPDTTNLGEELRETLTQTTDDVRW.

It belongs to the phD/YefM antitoxin family. As to quaternary structure, interacts with cognate toxin VapC4.

Antitoxin component of a type II toxin-antitoxin (TA) system. Antitoxin that counteracts the effect of the VapC4 toxin. The protein is Antitoxin VapB4 (vapB4) of Mycobacterium tuberculosis (strain CDC 1551 / Oshkosh).